The chain runs to 386 residues: 11-beta-hydroxysteroid dehydrogenase type 2 (386 aa).

Residue 82 to 111 (TRAVLITGCDTGFGKETAKKLDAMGFTVLA) coordinates NAD(+). A substrate-binding site is contributed by serine 219. Catalysis depends on tyrosine 232, which acts as the Proton acceptor.

It belongs to the short-chain dehydrogenases/reductases (SDR) family. Interacts with ligand-free cytoplasmic NR3C2. In terms of tissue distribution, highly expressed in kidney. Also found in colon and small intestine. Not expressed in the adrenal gland. Expressed in uterus.

Its subcellular location is the microsome. It localises to the endoplasmic reticulum. The catalysed reaction is an 11beta-hydroxysteroid + NAD(+) = an 11-oxosteroid + NADH + H(+). It carries out the reaction corticosterone + NAD(+) = 11-dehydrocorticosterone + NADH + H(+). The enzyme catalyses 11beta,17beta-dihydroxyandrost-4-ene-3-one + NAD(+) = 17beta-hydroxyandrost-4-ene-3,11-dione + NADH + H(+). It catalyses the reaction 11beta-hydroxyandrost-4-ene-3,17-dione + NAD(+) = androst-4-ene-3,11,17-trione + NADH + H(+). It participates in steroid metabolism. Inhibited by glycyrrhetinic acid. Induced by progesterone, through the Ihh signaling pathway. Its function is as follows. Catalyzes the conversion of biologically active 11beta-hydroxyglucocorticoids (11beta-hydroxysteroid) such as corticosterone, to inactive 11-ketoglucocorticoids (11-oxosteroid) such as 11-dehydrocorticosterone, in the presence of NAD(+). Functions as a dehydrogenase (oxidase), thereby decreasing the concentration of active glucocorticoids, thus protecting the nonselective mineralocorticoid receptor from occupation by glucocorticoids. Plays an important role in maintaining glucocorticoids balance during preimplantation and protects the fetus from excessive maternal corticosterone exposure. Catalyzes the oxidation of 11beta-hydroxytestosterone (11beta,17beta-dihydroxyandrost-4-ene-3-one) to 11-ketotestosterone (17beta-hydroxyandrost-4-ene-3,11-dione), a major bioactive androgen. Catalyzes the conversion of 11beta-hydroxyandrostenedione (11beta-hydroxyandrost-4-ene-3,17-dione) to 11-ketoandrostenedione (androst-4-ene-3,11,17-trione), which can be further metabolized to 11-ketotestosterone. Converts 7-beta-25-dihydroxycholesterol to 7-oxo-25-hydroxycholesterol in vitro. 7-beta-25-dihydroxycholesterol (not 7-oxo-25-hydroxycholesterol) acts as a ligand for the G-protein-coupled receptor (GPCR) Epstein-Barr virus-induced gene 2 (EBI2) and may thereby regulate immune cell migration. This chain is 11-beta-hydroxysteroid dehydrogenase type 2 (Hsd11b2), found in Mus musculus (Mouse).